Reading from the N-terminus, the 428-residue chain is Glutamine synthetase, chloroplastic (428 aa).

A chloroplast-targeting transit peptide spans 1 to 49 (MAQILAASPTCQMRLTKPSSIASSKLWNSVVLKQKKQSSSKVRSFKVMA). Residues 75 to 155 (IIAEYIWIGG…VICDTYTPAG (81 aa)) form the GS beta-grasp domain. The interval 94–120 (RTLEKPVEDPSELPKWNYDGSSTGQAP) is disordered. S104 is modified (phosphoserine). One can recognise a GS catalytic domain in the interval 159 to 428 (PTNKRARAAE…LAAQKLSLKV (270 aa)).

This sequence belongs to the glutamine synthetase family. In terms of assembly, homooctamer.

It localises to the plastid. It is found in the chloroplast. The catalysed reaction is L-glutamate + NH4(+) + ATP = L-glutamine + ADP + phosphate + H(+). Functionally, the light-modulated chloroplast enzyme, encoded by a nuclear gene and expressed primarily in leaves, is responsible for the reassimilation of the ammonia generated by photorespiration. The chain is Glutamine synthetase, chloroplastic (GLN2) from Brassica napus (Rape).